Consider the following 1065-residue polypeptide: Carbamoyl phosphate synthase large chain (1065 aa).

The interval 1-401 (MPLDKTIKKV…ALLKAVTSLE (401 aa)) is carboxyphosphate synthetic domain. Arg-129, Arg-169, Gly-175, Gly-176, Gln-208, Val-210, Glu-215, Gly-241, Val-242, His-243, Gln-284, and Glu-298 together coordinate ATP. Residues 133–327 (KNLMEEIDEP…IAKIAAKIAV (195 aa)) enclose the ATP-grasp 1 domain. Mg(2+) contacts are provided by Gln-284, Glu-298, and Asn-300. The Mn(2+) site is built by Gln-284, Glu-298, and Asn-300. Positions 402 to 548 (GKISGLRLEK…YSSYENEDEN (147 aa)) are oligomerization domain. The carbamoyl phosphate synthetic domain stretch occupies residues 549–931 (EVTDDKKIVV…AIYKGFRAAG (383 aa)). Residues 673-863 (SELLKELNIP…MVKLAVEILT (191 aa)) form the ATP-grasp 2 domain. Residues Arg-709, Lys-748, Ile-750, Glu-754, Gly-779, Val-780, His-781, Ser-782, Gln-822, and Glu-834 each coordinate ATP. Residues Gln-822, Glu-834, and Asn-836 each contribute to the Mg(2+) site. Positions 822, 834, and 836 each coordinate Mn(2+). The 134-residue stretch at 932–1065 (IEVPKDGGNL…EYRAMKEYFK (134 aa)) folds into the MGS-like domain. The interval 932 to 1065 (IEVPKDGGNL…EYRAMKEYFK (134 aa)) is allosteric domain.

The protein belongs to the CarB family. In terms of assembly, composed of two chains; the small (or glutamine) chain promotes the hydrolysis of glutamine to ammonia, which is used by the large (or ammonia) chain to synthesize carbamoyl phosphate. Tetramer of heterodimers (alpha,beta)4. It depends on Mg(2+) as a cofactor. Mn(2+) serves as cofactor.

The enzyme catalyses hydrogencarbonate + L-glutamine + 2 ATP + H2O = carbamoyl phosphate + L-glutamate + 2 ADP + phosphate + 2 H(+). It carries out the reaction hydrogencarbonate + NH4(+) + 2 ATP = carbamoyl phosphate + 2 ADP + phosphate + 2 H(+). Its pathway is amino-acid biosynthesis; L-arginine biosynthesis; carbamoyl phosphate from bicarbonate: step 1/1. The protein operates within pyrimidine metabolism; UMP biosynthesis via de novo pathway; (S)-dihydroorotate from bicarbonate: step 1/3. Large subunit of the glutamine-dependent carbamoyl phosphate synthetase (CPSase). CPSase catalyzes the formation of carbamoyl phosphate from the ammonia moiety of glutamine, carbonate, and phosphate donated by ATP, constituting the first step of 2 biosynthetic pathways, one leading to arginine and/or urea and the other to pyrimidine nucleotides. The large subunit (synthetase) binds the substrates ammonia (free or transferred from glutamine from the small subunit), hydrogencarbonate and ATP and carries out an ATP-coupled ligase reaction, activating hydrogencarbonate by forming carboxy phosphate which reacts with ammonia to form carbamoyl phosphate. The chain is Carbamoyl phosphate synthase large chain from Clostridium acetobutylicum (strain ATCC 824 / DSM 792 / JCM 1419 / IAM 19013 / LMG 5710 / NBRC 13948 / NRRL B-527 / VKM B-1787 / 2291 / W).